Consider the following 206-residue polypeptide: MAPSHLSVREMREDEKPLVLEMLKAGVKDTENRVALHALTRPPALLLLAAASSGLRFVLASFALALLLPVFLAVAAVKLGLRARWGSLPPPGGLGGPWVAVRGSGDVCGVLALAPGTNAGDGARVTRLSVSRWHRRRGVGRRLLAFAEARARAWAGGMGEPRARLVVPVAVAAWGVGGMLEGCGYQAEGGWGCLGYTLVREFSKDL.

One can recognise an N-acetyltransferase domain in the interval 6 to 206 (LSVREMREDE…TLVREFSKDL (201 aa)). A helical transmembrane segment spans residues 57–77 (FVLASFALALLLPVFLAVAAV).

The protein belongs to the camello family. In terms of tissue distribution, expressed in K-562 and HeLa cell lines and in brain.

The protein resides in the membrane. Functionally, probable acetyltransferase. In terms of biological role, may act as a transcription factor that regulates the expression of coproporphyrinogen oxidase by binding to a promoter regulatory element. The polypeptide is Probable N-acetyltransferase 14 (NAT14) (Homo sapiens (Human)).